Consider the following 600-residue polypeptide: NADH-quinone oxidoreductase subunit C/D (600 aa).

Positions 1–190 are NADH dehydrogenase I subunit C; sequence MVNNMTDLTA…DPFELTKAKQ (190 aa). The NADH dehydrogenase I subunit D stretch occupies residues 214–600; sequence DFMFLNLGPN…IDFVMSDVDR (387 aa).

This sequence in the N-terminal section; belongs to the complex I 30 kDa subunit family. The protein in the C-terminal section; belongs to the complex I 49 kDa subunit family. NDH-1 is composed of 13 different subunits. Subunits NuoB, CD, E, F, and G constitute the peripheral sector of the complex.

Its subcellular location is the cell inner membrane. The catalysed reaction is a quinone + NADH + 5 H(+)(in) = a quinol + NAD(+) + 4 H(+)(out). Its function is as follows. NDH-1 shuttles electrons from NADH, via FMN and iron-sulfur (Fe-S) centers, to quinones in the respiratory chain. The immediate electron acceptor for the enzyme in this species is believed to be ubiquinone. Couples the redox reaction to proton translocation (for every two electrons transferred, four hydrogen ions are translocated across the cytoplasmic membrane), and thus conserves the redox energy in a proton gradient. The chain is NADH-quinone oxidoreductase subunit C/D from Citrobacter koseri (strain ATCC BAA-895 / CDC 4225-83 / SGSC4696).